Here is a 98-residue protein sequence, read N- to C-terminus: Integration host factor subunit beta (98 aa).

The protein belongs to the bacterial histone-like protein family. Heterodimer of an alpha and a beta chain.

Functionally, this protein is one of the two subunits of integration host factor, a specific DNA-binding protein that functions in genetic recombination as well as in transcriptional and translational control. The polypeptide is Integration host factor subunit beta (Pseudomonas syringae pv. tomato (strain ATCC BAA-871 / DC3000)).